Consider the following 796-residue polypeptide: Probable phosphoketolase (796 aa).

Belongs to the XFP family. Thiamine diphosphate serves as cofactor.

The polypeptide is Probable phosphoketolase (Streptomyces coelicolor (strain ATCC BAA-471 / A3(2) / M145)).